Consider the following 148-residue polypeptide: SsrA-binding protein (148 aa).

The tract at residues 119–148 (AKGKKQHDKRQSMKEADWKREKQRLIKHTR) is disordered. Residues 127 to 142 (KRQSMKEADWKREKQR) show a composition bias toward basic and acidic residues.

This sequence belongs to the SmpB family.

It localises to the cytoplasm. Functionally, required for rescue of stalled ribosomes mediated by trans-translation. Binds to transfer-messenger RNA (tmRNA), required for stable association of tmRNA with ribosomes. tmRNA and SmpB together mimic tRNA shape, replacing the anticodon stem-loop with SmpB. tmRNA is encoded by the ssrA gene; the 2 termini fold to resemble tRNA(Ala) and it encodes a 'tag peptide', a short internal open reading frame. During trans-translation Ala-aminoacylated tmRNA acts like a tRNA, entering the A-site of stalled ribosomes, displacing the stalled mRNA. The ribosome then switches to translate the ORF on the tmRNA; the nascent peptide is terminated with the 'tag peptide' encoded by the tmRNA and targeted for degradation. The ribosome is freed to recommence translation, which seems to be the essential function of trans-translation. The polypeptide is SsrA-binding protein (Neisseria meningitidis serogroup C (strain 053442)).